The following is a 241-amino-acid chain: Lipoprotein MxiJ (241 aa).

A signal peptide spans 1 to 17 (MIRYKGFILFLLLMLIG). C18 carries the N-palmitoyl cysteine lipid modification. C18 is lipidated: S-diacylglycerol cysteine.

Belongs to the YscJ lipoprotein family.

The protein resides in the cell outer membrane. In terms of biological role, involved in the secretion of the Ipa antigens. The protein is Lipoprotein MxiJ (mxiJ) of Shigella sonnei.